The following is a 522-amino-acid chain: Cytochrome P450 1A1 (522 aa).

Phe-229 is a substrate binding site. Cys-463 is a heme binding site.

It belongs to the cytochrome P450 family. The cofactor is heme. In terms of tissue distribution, liver.

It is found in the endoplasmic reticulum membrane. The protein localises to the microsome membrane. It carries out the reaction an organic molecule + reduced [NADPH--hemoprotein reductase] + O2 = an alcohol + oxidized [NADPH--hemoprotein reductase] + H2O + H(+). Cytochromes P450 are a group of heme-thiolate monooxygenases. They oxidize a variety of structurally unrelated compounds, including steroids, fatty acids, and xenobiotics. This chain is Cytochrome P450 1A1 (cyp1a1), found in Oncorhynchus mykiss (Rainbow trout).